Consider the following 167-residue polypeptide: EF-hand calcium-binding domain-containing protein 11 (167 aa).

3 consecutive EF-hand domains span residues 17–52, 91–126, and 127–162; these read AERKKIELVFHQCDVDKKGYMSREDLKIAVVMLFGY, DPYEKARQIFSAFDVHCRGFLKLDDFKSAFKRVAPR, and LQERTVLEAFRHADQDSDGHISFKDFENIISYGLAN. Residues Asp-140, Asp-142, Asp-144, His-146, and Asp-151 each contribute to the Ca(2+) site.

The sequence is that of EF-hand calcium-binding domain-containing protein 11 (efcab11) from Danio rerio (Zebrafish).